We begin with the raw amino-acid sequence, 474 residues long: Methylenetetrahydrofolate--tRNA-(uracil-5-)-methyltransferase TrmFO (474 aa).

13 to 18 (GGGLAG) contributes to the FAD binding site.

It belongs to the MnmG family. TrmFO subfamily. Requires FAD as cofactor.

The protein resides in the cytoplasm. It carries out the reaction uridine(54) in tRNA + (6R)-5,10-methylene-5,6,7,8-tetrahydrofolate + NADH + H(+) = 5-methyluridine(54) in tRNA + (6S)-5,6,7,8-tetrahydrofolate + NAD(+). It catalyses the reaction uridine(54) in tRNA + (6R)-5,10-methylene-5,6,7,8-tetrahydrofolate + NADPH + H(+) = 5-methyluridine(54) in tRNA + (6S)-5,6,7,8-tetrahydrofolate + NADP(+). Its function is as follows. Catalyzes the folate-dependent formation of 5-methyl-uridine at position 54 (M-5-U54) in all tRNAs. The chain is Methylenetetrahydrofolate--tRNA-(uracil-5-)-methyltransferase TrmFO from Bartonella tribocorum (strain CIP 105476 / IBS 506).